A 455-amino-acid chain; its full sequence is Nuclear mRNA export protein THP1 (455 aa).

One can recognise a PCI domain in the interval 220–431; it reads IEYRYLLGRY…QLCVVKKTTM (212 aa).

As to quaternary structure, heterodimer with THP1. The SAC3-THP1 complex interacts with CDC31 and SUS1, and with the mRNA export factor MEX67-MTR2, the TREX complex component SUB2, and the nucleoporin NUP1.

It is found in the nucleus envelope. Functionally, component of the SAC3-THP1 complex, which functions in transcription-coupled mRNA export from the nucleus to the cytoplasm. SAC3-THP1 functions in docking export-competent ribonucleoprotein particles (mRNPs) to the nuclear entrance of the nuclear pore complex (nuclear basket), by association with components of the nuclear mRNA export machinery (MEX67-MTR2 and SUB2) in the nucleoplasm and the nucleoporin NUP1 at the nuclear basket. THP1 binds to RNA in vitro. The polypeptide is Nuclear mRNA export protein THP1 (THP1) (Saccharomyces cerevisiae (strain ATCC 204508 / S288c) (Baker's yeast)).